The sequence spans 423 residues: 26S proteasome regulatory subunit 6B homolog (423 aa).

Glycine 207 to threonine 214 provides a ligand contact to ATP.

Belongs to the AAA ATPase family.

It localises to the cytoplasm. The protein resides in the nucleus. Functionally, the 26S proteasome is involved in the ATP-dependent degradation of ubiquitinated proteins. The regulatory (or ATPase) complex confers ATP dependency and substrate specificity to the 26S complex. The chain is 26S proteasome regulatory subunit 6B homolog (tbpA) from Aspergillus niger.